The sequence spans 406 residues: Calsequestrin-1 (406 aa).

The signal sequence occupies residues 1-34 (MRATDRMGARAVSKLRLALLFVLVLGTPRSGVQG). The residue at position 43 (Tyr43) is a Phosphotyrosine. A Phosphoserine modification is found at Ser81. The residue at position 124 (Thr124) is a Phosphothreonine. The residue at position 216 (Ser216) is a Phosphoserine. An N-linked (GlcNAc...) asparagine glycan is attached at Asn350. The tract at residues 382-406 (EGEINTEDDDDDDDDDDDDDDDDDD) is disordered.

Belongs to the calsequestrin family. In terms of assembly, monomer; increases in response to a depletion of intracellular calcium. Homodimer. Homotetramer and homopolymer. Can form linear homooligomers. Ca(2+) ions promote oligomerization. Interacts (via C-terminal end and preferentially with the monomeric form) with STIM1; this interaction increases in response to a depletion of intracellular calcium, decreases both STIM1 aggregation and clustering, interaction of STIM1 with ORAI1 and store-operated Ca(2+) entry (SOCE) activity. Interacts with ASPH and TRDN. N-glycosylated. In terms of tissue distribution, detected in skeletal muscle and in smooth muscle from vas deferens, aorta and stomach (at protein level).

The protein localises to the endoplasmic reticulum. It localises to the sarcoplasmic reticulum. Its subcellular location is the sarcoplasmic reticulum lumen. The protein resides in the sarcoplasmic reticulum membrane. It is found in the mitochondrion matrix. Functionally, calsequestrin is a high-capacity, moderate affinity, calcium-binding protein and thus acts as an internal calcium store in muscle. Calcium ions are bound by clusters of acidic residues at the protein surface, often at the interface between subunits. Can bind around 80 Ca(2+) ions. Regulates the release of lumenal Ca(2+) via the calcium release channel RYR1; this plays an important role in triggering muscle contraction. Negatively regulates store-operated Ca(2+) entry (SOCE) activity. In Rattus norvegicus (Rat), this protein is Calsequestrin-1 (Casq1).